The primary structure comprises 265 residues: Urease accessory protein UreH (265 aa).

Belongs to the UreD family. In terms of assembly, ureH, UreF and UreG form a complex that acts as a GTP-hydrolysis-dependent molecular chaperone, activating the urease apoprotein by helping to assemble the nickel containing metallocenter of UreC. The UreE protein probably delivers the nickel.

Its subcellular location is the cytoplasm. Required for maturation of urease via the functional incorporation of the urease nickel metallocenter. This is Urease accessory protein UreH from Helicobacter pylori (strain P12).